A 510-amino-acid polypeptide reads, in one-letter code: Bifunctional purine biosynthesis protein PurH (510 aa).

The region spanning 1–145 (MTKRALLSVS…KNFAAVLPIV (145 aa)) is the MGS-like domain.

Belongs to the PurH family.

It catalyses the reaction (6R)-10-formyltetrahydrofolate + 5-amino-1-(5-phospho-beta-D-ribosyl)imidazole-4-carboxamide = 5-formamido-1-(5-phospho-D-ribosyl)imidazole-4-carboxamide + (6S)-5,6,7,8-tetrahydrofolate. The catalysed reaction is IMP + H2O = 5-formamido-1-(5-phospho-D-ribosyl)imidazole-4-carboxamide. Its pathway is purine metabolism; IMP biosynthesis via de novo pathway; 5-formamido-1-(5-phospho-D-ribosyl)imidazole-4-carboxamide from 5-amino-1-(5-phospho-D-ribosyl)imidazole-4-carboxamide (10-formyl THF route): step 1/1. It functions in the pathway purine metabolism; IMP biosynthesis via de novo pathway; IMP from 5-formamido-1-(5-phospho-D-ribosyl)imidazole-4-carboxamide: step 1/1. In Lactiplantibacillus plantarum (strain ATCC BAA-793 / NCIMB 8826 / WCFS1) (Lactobacillus plantarum), this protein is Bifunctional purine biosynthesis protein PurH.